A 226-amino-acid chain; its full sequence is Enolase-phosphatase E1 (226 aa).

Belongs to the HAD-like hydrolase superfamily. MasA/MtnC family. Monomer. It depends on Mg(2+) as a cofactor.

The enzyme catalyses 5-methylsulfanyl-2,3-dioxopentyl phosphate + H2O = 1,2-dihydroxy-5-(methylsulfanyl)pent-1-en-3-one + phosphate. It participates in amino-acid biosynthesis; L-methionine biosynthesis via salvage pathway; L-methionine from S-methyl-5-thio-alpha-D-ribose 1-phosphate: step 3/6. It functions in the pathway amino-acid biosynthesis; L-methionine biosynthesis via salvage pathway; L-methionine from S-methyl-5-thio-alpha-D-ribose 1-phosphate: step 4/6. Its function is as follows. Bifunctional enzyme that catalyzes the enolization of 2,3-diketo-5-methylthiopentyl-1-phosphate (DK-MTP-1-P) into the intermediate 2-hydroxy-3-keto-5-methylthiopentenyl-1-phosphate (HK-MTPenyl-1-P), which is then dephosphorylated to form the acireductone 1,2-dihydroxy-3-keto-5-methylthiopentene (DHK-MTPene). The protein is Enolase-phosphatase E1 of Shewanella pealeana (strain ATCC 700345 / ANG-SQ1).